A 146-amino-acid polypeptide reads, in one-letter code: Putative pre-16S rRNA nuclease (146 aa).

This sequence belongs to the YqgF nuclease family.

The protein localises to the cytoplasm. Could be a nuclease involved in processing of the 5'-end of pre-16S rRNA. The chain is Putative pre-16S rRNA nuclease from Pseudomonas syringae pv. tomato (strain ATCC BAA-871 / DC3000).